The chain runs to 163 residues: 5-hydroxymethyl-dUMP N-hydrolase (163 aa).

Residue Ala-2 is modified to N-acetylalanine. Gly-16 provides a ligand contact to 5-hydroxymethyl-dUMP. Phosphoserine is present on Ser-17. Ile-18, Arg-19, Gly-20, Ser-87, Gly-89, and Glu-93 together coordinate 5-hydroxymethyl-dUMP. Phosphoserine is present on Ser-87. Phosphoserine occurs at positions 112, 117, 127, and 158. 5-hydroxymethyl-dUMP is bound at residue Ser-117.

In terms of assembly, monomer and homodimer. In terms of tissue distribution, highly expressed in heart, kidney, liver and spleen. Weakly expressed in lung and skeletal muscle.

The protein resides in the cytoplasm. Its subcellular location is the nucleus. It carries out the reaction 5-hydroxymethyl-dUMP + H2O = 5-hydroxymethyluracil + 2-deoxy-D-ribose 5-phosphate. Part of a nucleotide salvage pathway that eliminates epigenetically modified 5-hydroxymethyl-dCMP (hmdCMP) in a two-step process entailing deamination to cytotoxic 5-hydroxymethyl-dUMP (hmdUMP), followed by its hydrolysis into 5-hydroxymethyluracil (hmU) and 2-deoxy-D-ribose 5-phosphate (deoxyribosephosphate). Catalyzes the second step in that pathway, the hydrolysis of the N-glycosidic bond in hmdUMP, degrading this cytotoxic nucleotide to avoid its genomic integration. The chain is 5-hydroxymethyl-dUMP N-hydrolase from Rattus norvegicus (Rat).